The following is a 371-amino-acid chain: MSQDKKTPLYETHRTLGAKMIPFGGWDMPVQYSGIIAEHNATREAAGLFDVSHMGEIFITGNPKSILLFLESITCNSVASLSDFQVQYNAILNQNGGLVDDVTIYKFSSEKYMICSNASNYEAVTEHLLEHLPISGVKVDNQSLQWHQIALQGPKANEIFSKFLKRDLDSIQYYRFMLLPYQGEEIIVSRTGYTGEDGFEIYSSIPIGLKLWNELLEFGKPYGLLPCGLGARDTLRIEAKYPLYGHELNDQWTPIESGIGWIVKEKENPYFSSEKILFQKKNGVPSKIVSFALTEAGVPRENFRVLDSQGNEIGKTTSGTFSPSLKKGIGLALIQSEKIKDGEPIQIEIREQPKQAIITMKPFIPGSIRKN.

Belongs to the GcvT family. In terms of assembly, the glycine cleavage system is composed of four proteins: P, T, L and H.

It catalyses the reaction N(6)-[(R)-S(8)-aminomethyldihydrolipoyl]-L-lysyl-[protein] + (6S)-5,6,7,8-tetrahydrofolate = N(6)-[(R)-dihydrolipoyl]-L-lysyl-[protein] + (6R)-5,10-methylene-5,6,7,8-tetrahydrofolate + NH4(+). The glycine cleavage system catalyzes the degradation of glycine. The sequence is that of Aminomethyltransferase from Leptospira interrogans serogroup Icterohaemorrhagiae serovar Lai (strain 56601).